Reading from the N-terminus, the 137-residue chain is Gonadotropin subunit beta-2 (137 aa).

The signal sequence occupies residues 1 to 24 (MLPFMLSSFLGASPSIWPLAPAEA). 6 cysteine pairs are disulfide-bonded: Cys-30–Cys-76, Cys-44–Cys-91, Cys-47–Cys-129, Cys-55–Cys-107, Cys-59–Cys-109, and Cys-112–Cys-119. Asn-34 carries N-linked (GlcNAc...) asparagine glycosylation.

It belongs to the glycoprotein hormones subunit beta family. Heterodimer of an alpha and a beta chain.

It is found in the secreted. Involved in gametogenesis and steroidogenesis. The protein is Gonadotropin subunit beta-2 (cgbb) of Acanthopagrus latus (Yellowfin seabream).